Here is a 356-residue protein sequence, read N- to C-terminus: Phosphoribosylformylglycinamidine cyclo-ligase (356 aa).

It belongs to the AIR synthase family.

The protein resides in the cytoplasm. It carries out the reaction 2-formamido-N(1)-(5-O-phospho-beta-D-ribosyl)acetamidine + ATP = 5-amino-1-(5-phospho-beta-D-ribosyl)imidazole + ADP + phosphate + H(+). Its pathway is purine metabolism; IMP biosynthesis via de novo pathway; 5-amino-1-(5-phospho-D-ribosyl)imidazole from N(2)-formyl-N(1)-(5-phospho-D-ribosyl)glycinamide: step 2/2. The polypeptide is Phosphoribosylformylglycinamidine cyclo-ligase (Sinorhizobium fredii (strain NBRC 101917 / NGR234)).